The following is a 257-amino-acid chain: Phosphonates import ATP-binding protein PhnC (257 aa).

One can recognise an ABC transporter domain in the interval 4–248 (IEFKDVRKVY…AFNEIYGRSI (245 aa)). 37 to 44 (GLSGSGKS) lines the ATP pocket.

This sequence belongs to the ABC transporter superfamily. Phosphonates importer (TC 3.A.1.9.1) family. The complex is composed of two ATP-binding proteins (PhnC), two transmembrane proteins (PhnE) and a solute-binding protein (PhnD).

It is found in the cell membrane. It catalyses the reaction phosphonate(out) + ATP + H2O = phosphonate(in) + ADP + phosphate + H(+). In terms of biological role, part of the ABC transporter complex PhnCDE involved in phosphonates import. Responsible for energy coupling to the transport system. The protein is Phosphonates import ATP-binding protein PhnC of Staphylococcus saprophyticus subsp. saprophyticus (strain ATCC 15305 / DSM 20229 / NCIMB 8711 / NCTC 7292 / S-41).